A 446-amino-acid polypeptide reads, in one-letter code: tRNA modification GTPase MnmE (446 aa).

Residues Arg-22, Glu-80, and Lys-119 each coordinate (6S)-5-formyl-5,6,7,8-tetrahydrofolate. Positions 215–370 constitute a TrmE-type G domain; that stretch reads GLSLVIAGRP…LKKVIKQVVG (156 aa). Residue Asn-225 participates in K(+) binding. GTP is bound by residues 225-230, 244-250, and 269-272; these read NAGKST, TEIAGTT, and DTAG. A Mg(2+)-binding site is contributed by Ser-229. K(+) contacts are provided by Thr-244, Ile-246, and Thr-249. Thr-250 lines the Mg(2+) pocket. Lys-446 lines the (6S)-5-formyl-5,6,7,8-tetrahydrofolate pocket.

This sequence belongs to the TRAFAC class TrmE-Era-EngA-EngB-Septin-like GTPase superfamily. TrmE GTPase family. Homodimer. Heterotetramer of two MnmE and two MnmG subunits. The cofactor is K(+).

The protein localises to the cytoplasm. Exhibits a very high intrinsic GTPase hydrolysis rate. Involved in the addition of a carboxymethylaminomethyl (cmnm) group at the wobble position (U34) of certain tRNAs, forming tRNA-cmnm(5)s(2)U34. In Legionella pneumophila (strain Corby), this protein is tRNA modification GTPase MnmE.